A 188-amino-acid polypeptide reads, in one-letter code: MINAQDIKIGTAIRMDGKLYFCIDFLHVKPGKGNTFMRTKLKDVVNGYVLERRFNIGEKLEDVRVERRPHQYLYMEGADYIFMNQETFDQIPIAHDLINGVDFLLEGMVVDVVSDASTETVLFADVPVKVQMKITYTEPGLKGDTATNTLKPATVESGATVRVPLFINEGETIEIDTRDGSYVGRVKA.

Belongs to the elongation factor P family.

It localises to the cytoplasm. It functions in the pathway protein biosynthesis; polypeptide chain elongation. Functionally, involved in peptide bond synthesis. Stimulates efficient translation and peptide-bond synthesis on native or reconstituted 70S ribosomes in vitro. Probably functions indirectly by altering the affinity of the ribosome for aminoacyl-tRNA, thus increasing their reactivity as acceptors for peptidyl transferase. In Phocaeicola vulgatus (strain ATCC 8482 / DSM 1447 / JCM 5826 / CCUG 4940 / NBRC 14291 / NCTC 11154) (Bacteroides vulgatus), this protein is Elongation factor P.